The sequence spans 880 residues: Leucine-rich repeat-containing protein 66 (880 aa).

Residues 4–24 traverse the membrane as a helical segment; the sequence is LYFRVITIVIGLYFTGIMTNA. N-linked (GlcNAc...) asparagine glycosylation is present at asparagine 45. LRR repeat units follow at residues 86 to 107, 110 to 130, 149 to 171, 172 to 193, 196 to 217, and 220 to 241; these read KIKH…PFAY, ALEV…DLLS, LLKV…WKLK, SLQS…DFHN, QLEN…AFKD, and KLQV…MIIA. Asparagine 115 carries N-linked (GlcNAc...) asparagine glycosylation. Residues 319 to 368 form a disordered region; it reads SKAERPQGGRHTGISTLGKKAKAGSGLRKKQRRLPRSVRSTRDVQAAGKK. A compositionally biased stretch (basic residues) spans 337–354; sequence KKAKAGSGLRKKQRRLPR. The helical transmembrane segment at 376 to 396 threads the bilayer; sequence ALAVCLSVFITFLVAFSLGAF. 2 disordered regions span residues 463-504 and 679-746; these read PHPH…NDGA and VTPA…SKDN. Residues 483–493 are compositionally biased toward polar residues; that stretch reads GSSQSPGQCGD. The segment covering 697-707 has biased composition (acidic residues); it reads CELESDCDSDE. The span at 709-720 shows a compositional bias: low complexity; that stretch reads SLFTLSSISSES. Serine 723 carries the post-translational modification Phosphoserine. The segment covering 737–746 has biased composition (polar residues); it reads DESSGASKDN. Asparagine 746 carries N-linked (GlcNAc...) asparagine glycosylation. Serine 752 carries the phosphoserine modification. Asparagine 756 carries N-linked (GlcNAc...) asparagine glycosylation. Disordered regions lie at residues 764-816 and 855-880; these read GKCK…PLGD and TPPC…DILK. Basic and acidic residues-rich tracts occupy residues 788-800 and 865-880; these read THLE…DRSE and DPDK…DILK.

The protein resides in the membrane. This is Leucine-rich repeat-containing protein 66 (LRRC66) from Homo sapiens (Human).